Here is a 430-residue protein sequence, read N- to C-terminus: Glutamyl-tRNA reductase (430 aa).

Residues 50-53 (TCNR), Ser108, 113-115 (EPQ), and Gln119 each bind substrate. Cys51 functions as the Nucleophile in the catalytic mechanism. 188–193 (GAGEMA) is a binding site for NADP(+).

This sequence belongs to the glutamyl-tRNA reductase family. In terms of assembly, homodimer.

The catalysed reaction is (S)-4-amino-5-oxopentanoate + tRNA(Glu) + NADP(+) = L-glutamyl-tRNA(Glu) + NADPH + H(+). It participates in porphyrin-containing compound metabolism; protoporphyrin-IX biosynthesis; 5-aminolevulinate from L-glutamyl-tRNA(Glu): step 1/2. Its function is as follows. Catalyzes the NADPH-dependent reduction of glutamyl-tRNA(Glu) to glutamate 1-semialdehyde (GSA). This is Glutamyl-tRNA reductase from Desulfovibrio desulfuricans (strain ATCC 27774 / DSM 6949 / MB).